Reading from the N-terminus, the 506-residue chain is MTYPGPPRPVRISATPLAELADQLGVAAPDGSAEITGITHDSRAVRPGDLYAALPGARLHGADFVTQAAGLGAAAVLTDPAGAERAAAAGLPALVVDDPRARMGELAATIYGHPGRDLLQIGITGTSGKTTTAYLVEGGLRTAKSTGLIGTVEMRIGDERIKSERTTPEATDLQALFAVMRERGTEAVAMEVSSHALVLGRVDACVFDIAVFTNLSPEHMEFHSGMEDYFQAKAQLFTPKRSRLGVVNVDDEYGRRLAKEATVPVVTYSAEGHPDADWRADEVEVGPLDSTFTVLGPKGERIAAKSPLAGPFNVANTLAAIVALAAAGLDPQSAADGVAAVPGVPGRLERVDEGQPFFAVVDYAHKTDAVESVLRALRKVTEGKLHAVLGCGGDRDTTKREPMGAAVARFADTAVLTSDNPRSEDPLAILATMLQGAASVPAHERGEVQVFEDRAAAIAAAVARAEPGDTVLVAGKGHEQGQDIAGVVRPFDDRQVLREAIKKTQG.

S42 contacts UDP-N-acetyl-alpha-D-muramoyl-L-alanyl-D-glutamate. Residue 125-131 participates in ATP binding; the sequence is GTSGKTT. Residues 166-167, S193, and R201 contribute to the UDP-N-acetyl-alpha-D-muramoyl-L-alanyl-D-glutamate site; that span reads TT. The residue at position 233 (K233) is an N6-carboxylysine. Meso-2,6-diaminopimelate is bound by residues R395, 419 to 422, G475, and E479; that span reads DNPR. Residues 419 to 422 carry the Meso-diaminopimelate recognition motif motif; sequence DNPR.

It belongs to the MurCDEF family. MurE subfamily. Mg(2+) is required as a cofactor. Post-translationally, carboxylation is probably crucial for Mg(2+) binding and, consequently, for the gamma-phosphate positioning of ATP.

The protein localises to the cytoplasm. It carries out the reaction UDP-N-acetyl-alpha-D-muramoyl-L-alanyl-D-glutamate + meso-2,6-diaminopimelate + ATP = UDP-N-acetyl-alpha-D-muramoyl-L-alanyl-gamma-D-glutamyl-meso-2,6-diaminopimelate + ADP + phosphate + H(+). Its pathway is cell wall biogenesis; peptidoglycan biosynthesis. Functionally, catalyzes the addition of meso-diaminopimelic acid to the nucleotide precursor UDP-N-acetylmuramoyl-L-alanyl-D-glutamate (UMAG) in the biosynthesis of bacterial cell-wall peptidoglycan. This is UDP-N-acetylmuramoyl-L-alanyl-D-glutamate--2,6-diaminopimelate ligase from Streptomyces coelicolor (strain ATCC BAA-471 / A3(2) / M145).